A 550-amino-acid chain; its full sequence is CTP synthase (550 aa).

The interval 1-266 (MNVNYIFVTG…DEYICKYFNL (266 aa)) is amidoligase domain. A CTP-binding site is contributed by Ser-14. Residue Ser-14 coordinates UTP. ATP-binding positions include 15-20 (SLGKGI) and Asp-72. Mg(2+) contacts are provided by Asp-72 and Glu-140. CTP-binding positions include 147-149 (DIE), 187-192 (KTKPTQ), and Lys-223. UTP contacts are provided by residues 187 to 192 (KTKPTQ) and Lys-223. Residues 291-546 (TIGIVGKYIR…INAAIQYQCK (256 aa)) enclose the Glutamine amidotransferase type-1 domain. Position 353 (Gly-353) interacts with L-glutamine. Residue Cys-380 is the Nucleophile; for glutamine hydrolysis of the active site. Residues 381 to 384 (LGMQ), Glu-404, and Arg-474 contribute to the L-glutamine site. Residues His-519 and Glu-521 contribute to the active site.

The protein belongs to the CTP synthase family. As to quaternary structure, homotetramer.

The enzyme catalyses UTP + L-glutamine + ATP + H2O = CTP + L-glutamate + ADP + phosphate + 2 H(+). It carries out the reaction L-glutamine + H2O = L-glutamate + NH4(+). The catalysed reaction is UTP + NH4(+) + ATP = CTP + ADP + phosphate + 2 H(+). The protein operates within pyrimidine metabolism; CTP biosynthesis via de novo pathway; CTP from UDP: step 2/2. With respect to regulation, allosterically activated by GTP, when glutamine is the substrate; GTP has no effect on the reaction when ammonia is the substrate. The allosteric effector GTP functions by stabilizing the protein conformation that binds the tetrahedral intermediate(s) formed during glutamine hydrolysis. Inhibited by the product CTP, via allosteric rather than competitive inhibition. Its function is as follows. Catalyzes the ATP-dependent amination of UTP to CTP with either L-glutamine or ammonia as the source of nitrogen. Regulates intracellular CTP levels through interactions with the four ribonucleotide triphosphates. In Blochmanniella floridana, this protein is CTP synthase.